The following is a 302-amino-acid chain: MTNMTLRKHVIYFLFFISCSLSKPSDASRGGIAIYWGQNGNEGNLSATCATGRYAYVNVAFLVKFGNGQTPELNLAGHCNPAANTCTHFGSQVKDCQSRGIKVMLSLGGGIGNYSIGSREDAKVIADYLWNNFLGGKSSSRPLGDAVLDGIDFNIELGSPQHWDDLARTLSKFSHRGRKIYLTGAPQCPFPDRLMGSALNTKRFDYVWIQFYNNPPCSYSSGNTQNLFDSWNKWTTSIAAQKFFLGLPAAPEAAGSGYIPPDVLTSQILPTLKKSRKYGGVMLWSKFWDDKNGYSSSILASV.

An N-terminal signal peptide occupies residues 1–30 (MTNMTLRKHVIYFLFFISCSLSKPSDASRG). A GH18 domain is found at 31-302 (GIAIYWGQNG…GYSSSILASV (272 aa)). 2 disulfides stabilise this stretch: Cys49–Cys96 and Cys79–Cys86. The Proton donor role is filled by Glu156. Cys188 and Cys217 are disulfide-bonded.

This sequence belongs to the glycosyl hydrolase 18 family. Chitinase class III subfamily.

The protein localises to the secreted. The protein resides in the extracellular space. The catalysed reaction is Random endo-hydrolysis of N-acetyl-beta-D-glucosaminide (1-&gt;4)-beta-linkages in chitin and chitodextrins.. Functionally, this protein functions as a defense against chitin containing fungal pathogens. This is Acidic endochitinase (CHIB1) from Arabidopsis thaliana (Mouse-ear cress).